An 88-amino-acid polypeptide reads, in one-letter code: Putative membrane protein insertion efficiency factor (88 aa).

Belongs to the UPF0161 family.

It is found in the cell inner membrane. Its function is as follows. Could be involved in insertion of integral membrane proteins into the membrane. The protein is Putative membrane protein insertion efficiency factor of Synechococcus sp. (strain CC9311).